Here is a 505-residue protein sequence, read N- to C-terminus: MAQVINTNSLSLLTQNNLNKSQSSLSSAIERLSSGLRINSAKDDAAGQAIANRFTSNIKGLTQASRNANDGISIAQTTEGALNEINNNLQRVRELSVQATNGTNSDSDLKSIQDEIQQRLEEIDRVSNQTQFNGVKVLSQDNQMKIQVGANDGETITIDLQKIDVKSLGLDGFNVNGPKEATVGDLKSSFKNVTGYDTYAAGANKYRVDINSGAVVTDDAAPDKVYVNAANGQLTTDDAENNTAVNLFKTTKSAAGTDEAKAIAGAIKGGKEGDTFDYKGVTFTIDTKTGDDGNGKVSTTINGEKVTLTVADIATGATDVNAATLQSSKNVYTSVVNGQFTFDDKTKNESAKLSDLEANNAVKGESKITVNGAEYTANAAGDKVTLAGKTMFIDKTASGVSTLINEDAAAAKKSTANPLASIDSALSKVDAVRSSLGAIQNRFDSAITNLGNTVTNLNSARSRIEDADYATEVSNMSKAQILQQAGTSVLAQANQVPQNVLSLLR.

This sequence belongs to the bacterial flagellin family.

The protein localises to the secreted. It localises to the bacterial flagellum. Its function is as follows. Flagellin is the subunit protein which polymerizes to form the filaments of bacterial flagella. This is Flagellin (fliC) from Salmonella montevideo.